A 436-amino-acid chain; its full sequence is UDP-N-acetylmuramate--L-alanine ligase (436 aa).

108-114 provides a ligand contact to ATP; sequence GAHGKTS.

It belongs to the MurCDEF family.

Its subcellular location is the cytoplasm. It carries out the reaction UDP-N-acetyl-alpha-D-muramate + L-alanine + ATP = UDP-N-acetyl-alpha-D-muramoyl-L-alanine + ADP + phosphate + H(+). Its pathway is cell wall biogenesis; peptidoglycan biosynthesis. Cell wall formation. This is UDP-N-acetylmuramate--L-alanine ligase from Bacillus cereus (strain G9842).